A 340-amino-acid chain; its full sequence is DRTIWPKKGFSIYWNIPTHFCHNFGVYFKELKQFNIKYNSMNNFRGETISLFYDPGNFPSMVLLKNGTYEIRNEGVPQKGNLTIHLEQFTKELDEIYPKKIAGGIGVIHFHNWRPIFRRNVDNLKINKDISIDLVRKEHPKWDKSMIEKEASNRFETSAKIFMEKTLKLAKEIRKKTEWGYHGYPHCLSGSTDKPSFDCDALSMSENDKMSWLFNNQNVLLPSIYLKNVLKPDEKIHLVQERLKEAIRISKNFKHLPKVLPYWWYTYQDKESIFLTEADVKNTFKEILTNGADGIIIWGVSYELTDRKRCEKLKEYLMKILGPIAFKVTKAVKENTPLNF.

Intrachain disulfides connect Cys21-Cys310 and Cys187-Cys199. 2 N-linked (GlcNAc...) asparagine glycosylation sites follow: Asn66 and Asn81.

Belongs to the glycosyl hydrolase 56 family. N-glycosylated on at least two Asn residues by identical heptasaccharide units composed of Man, GlcNAc, and Fuc residues in the molar ration of 3:2:2. In terms of tissue distribution, expressed by the venom gland.

The protein localises to the secreted. Functionally, has no hyaluronidase activity. The sequence is that of Inactive hyaluronidase B from Vespula vulgaris (Yellow jacket).